Consider the following 405-residue polypeptide: Arginine biosynthesis bifunctional protein ArgJ (405 aa).

Substrate-binding residues include T152, K178, T189, E276, N400, and T405. T189 (nucleophile) is an active-site residue.

It belongs to the ArgJ family. In terms of assembly, heterotetramer of two alpha and two beta chains.

It localises to the cytoplasm. It catalyses the reaction N(2)-acetyl-L-ornithine + L-glutamate = N-acetyl-L-glutamate + L-ornithine. The catalysed reaction is L-glutamate + acetyl-CoA = N-acetyl-L-glutamate + CoA + H(+). It functions in the pathway amino-acid biosynthesis; L-arginine biosynthesis; L-ornithine and N-acetyl-L-glutamate from L-glutamate and N(2)-acetyl-L-ornithine (cyclic): step 1/1. Its pathway is amino-acid biosynthesis; L-arginine biosynthesis; N(2)-acetyl-L-ornithine from L-glutamate: step 1/4. Catalyzes two activities which are involved in the cyclic version of arginine biosynthesis: the synthesis of N-acetylglutamate from glutamate and acetyl-CoA as the acetyl donor, and of ornithine by transacetylation between N(2)-acetylornithine and glutamate. This chain is Arginine biosynthesis bifunctional protein ArgJ, found in Pseudomonas fluorescens (strain Pf0-1).